A 233-amino-acid polypeptide reads, in one-letter code: MSNLSNLRHKLQNGLIASCQPVPGSAMDTPEIVAAMACAALAGGAVGLRIEGISNIQAVRRATDAPIIGIIKRDLPDSEVRITPWLEDIDALSAAGADIIAFDVTCRERPVSVADLYQRARATGCLTMADASNIDDGLLAHHLGIDFIGTTLSGYTQATVPTEPDLALVTQLAQAGCRVIAEGRYHSPALAAAAISAGAYAVTVGSAITRIEHICGWFCDAIKQCETEKLTEY.

This sequence belongs to the NanE family.

The catalysed reaction is an N-acyl-D-glucosamine 6-phosphate = an N-acyl-D-mannosamine 6-phosphate. It functions in the pathway amino-sugar metabolism; N-acetylneuraminate degradation; D-fructose 6-phosphate from N-acetylneuraminate: step 3/5. Its function is as follows. Converts N-acetylmannosamine-6-phosphate (ManNAc-6-P) to N-acetylglucosamine-6-phosphate (GlcNAc-6-P). The chain is Putative N-acetylmannosamine-6-phosphate 2-epimerase from Yersinia pestis bv. Antiqua (strain Antiqua).